The primary structure comprises 74 residues: uncharacterized protein (74 aa).

A disordered region spans residues 39–74 (SSPQAPGTLKPRALVRPSPGPVQENHLSEAQFPPKL).

This is an uncharacterized protein from Homo sapiens (Human).